Here is a 262-residue protein sequence, read N- to C-terminus: Phosphatidylglycerol--prolipoprotein diacylglyceryl transferase (262 aa).

The next 4 membrane-spanning stretches (helical) occupy residues 9 to 29 (LGPL…ILAV), 41 to 61 (IIPD…ILGA), 80 to 100 (IFAI…GALV), and 109 to 129 (LINT…AQSL). Arg131 contributes to the a 1,2-diacyl-sn-glycero-3-phospho-(1'-sn-glycerol) binding site. 3 helical membrane passes run 167–187 (QPTF…ILIF), 197–217 (GHIT…IEGM), and 226–246 (GLRV…MIVI).

This sequence belongs to the Lgt family.

Its subcellular location is the cell membrane. The enzyme catalyses L-cysteinyl-[prolipoprotein] + a 1,2-diacyl-sn-glycero-3-phospho-(1'-sn-glycerol) = an S-1,2-diacyl-sn-glyceryl-L-cysteinyl-[prolipoprotein] + sn-glycerol 1-phosphate + H(+). It functions in the pathway protein modification; lipoprotein biosynthesis (diacylglyceryl transfer). Functionally, catalyzes the transfer of the diacylglyceryl group from phosphatidylglycerol to the sulfhydryl group of the N-terminal cysteine of a prolipoprotein, the first step in the formation of mature lipoproteins. This is Phosphatidylglycerol--prolipoprotein diacylglyceryl transferase from Streptococcus pneumoniae (strain Taiwan19F-14).